The primary structure comprises 1307 residues: Rho1 guanine nucleotide exchange factor TUS1 (1307 aa).

Residues 1–10 show a composition bias toward polar residues; it reads MYRYNRSSPF. Disordered regions lie at residues 1 to 144, 164 to 194, and 219 to 239; these read MYRY…FIGN, PFAN…SDLR, and EDSE…NVSG. Basic and acidic residues predominate over residues 12-29; it reads RTPEKRVSRQESQRKSIE. Residues 37-79 show a composition bias toward polar residues; it reads NTRNSFLDDSDNGTDNISIGWTPISDTQQFQSPVPQAFTFTSK. Positions 87-97 are enriched in low complexity; it reads TSSSESTPKST. Positions 176 to 194 are enriched in basic and acidic residues; sequence SPRDSSKQQAHFSDESDLR. The DH domain occupies 467–657; the sequence is QRQSFIFDLI…EKLNFEVNQV (191 aa). A PH domain is found at 715–877; the sequence is KLVLSGTVYK…WIDAIMESFK (163 aa). A disordered region spans residues 780–802; it reads TSKQPLRNYSQKEHKSPMHNFST. The CNH domain occupies 938-1279; the sequence is TTRILCCEDV…KLASSERREK (342 aa).

Interacts with RHO1.

Guanine nucleotide-exchange factor (GEF) for RHO1 that stimulates the exchange of RHO1 GDP-bound form into GTP-bound form. Required for signaling of cell wall defects to RHO1. In Saccharomyces cerevisiae (strain ATCC 204508 / S288c) (Baker's yeast), this protein is Rho1 guanine nucleotide exchange factor TUS1 (TUS1).